Consider the following 525-residue polypeptide: GMP synthase [glutamine-hydrolyzing] (525 aa).

A Glutamine amidotransferase type-1 domain is found at 9–207; the sequence is RILILDFGSQ…VLDICQCEKL (199 aa). C86 acts as the Nucleophile in catalysis. Residues H181 and E183 contribute to the active site. One can recognise a GMPS ATP-PPase domain in the interval 208-400; the sequence is WTPDAIIEDA…LGLPYDMLYR (193 aa). Position 235–241 (235–241) interacts with ATP; it reads SGGVDSS.

Homodimer.

The enzyme catalyses XMP + L-glutamine + ATP + H2O = GMP + L-glutamate + AMP + diphosphate + 2 H(+). The protein operates within purine metabolism; GMP biosynthesis; GMP from XMP (L-Gln route): step 1/1. In terms of biological role, catalyzes the synthesis of GMP from XMP. The polypeptide is GMP synthase [glutamine-hydrolyzing] (Pseudoalteromonas atlantica (strain T6c / ATCC BAA-1087)).